The chain runs to 392 residues: 2-oxoisovalerate dehydrogenase subunit beta, mitochondrial (392 aa).

The transit peptide at 1–50 (MAVVAAAAGWLLRLRAAGAEGHWRRLPGAGLARGFLHPAATVEDAAQRRQ) directs the protein to the mitochondrion. Tyr152 contacts thiamine diphosphate. Positions 178, 180, 181, 228, and 231 each coordinate K(+). The residue at position 232 (Lys232) is an N6-acetyllysine. Asn233 contributes to the K(+) binding site. The residue at position 241 (Lys241) is an N6-acetyllysine.

Heterotetramer of 2 alpha/BCKDHA and 2 beta chains/BCKDHB that forms the branched-chain alpha-keto acid decarboxylase (E1) component of the BCKD complex. The branched-chain alpha-ketoacid dehydrogenase is a large complex composed of three major building blocks E1, E2 and E3. It is organized around E2, a 24-meric cubic core composed of DBT, to which are associated 6 to 12 copies of E1, and approximately 6 copies of the dehydrogenase E3, a DLD dimer. Requires thiamine diphosphate as cofactor.

It localises to the mitochondrion matrix. The catalysed reaction is N(6)-[(R)-lipoyl]-L-lysyl-[protein] + 3-methyl-2-oxobutanoate + H(+) = N(6)-[(R)-S(8)-2-methylpropanoyldihydrolipoyl]-L-lysyl-[protein] + CO2. Together with BCKDHA forms the heterotetrameric E1 subunit of the mitochondrial branched-chain alpha-ketoacid dehydrogenase (BCKD) complex. The BCKD complex catalyzes the multi-step oxidative decarboxylation of alpha-ketoacids derived from the branched-chain amino-acids valine, leucine and isoleucine producing CO2 and acyl-CoA which is subsequently utilized to produce energy. The E1 subunit catalyzes the first step with the decarboxylation of the alpha-ketoacid forming an enzyme-product intermediate. A reductive acylation mediated by the lipoylamide cofactor of E2 extracts the acyl group from the E1 active site for the next step of the reaction. The sequence is that of 2-oxoisovalerate dehydrogenase subunit beta, mitochondrial from Homo sapiens (Human).